The sequence spans 523 residues: Pentatricopeptide repeat-containing protein At3g21470 (523 aa).

PPR repeat units lie at residues 10 to 43 (GEFH…RGVY), 44 to 79 (FPGW…GVCS), 80 to 114 (DVMV…NVAT), 115 to 141 (WNAM…ISVC), 143 to 173 (NTVT…MPFE), 176 to 210 (NVKA…NAFV), 211 to 237 (WSLM…VFAR), 238 to 272 (DLVI…GYEP), 273 to 307 (DAVT…GIEL), 308 to 338 (NQFV…ISVR), 339 to 373 (SVAC…DLKP), 374 to 408 (DEIT…DVKP), and 409 to 439 (NVKH…MHVK). The interval 444–523 (VLGALLGACK…SPGLSSLVLT (80 aa)) is type E motif.

It belongs to the PPR family. PCMP-E subfamily.

The chain is Pentatricopeptide repeat-containing protein At3g21470 (PCMP-E29) from Arabidopsis thaliana (Mouse-ear cress).